Reading from the N-terminus, the 1165-residue chain is MPGITETSQVTGPVLAHVIVTEDPYDASERAFLSTDLYELLFEDYANGSKSGLTLISIQLMGSSLFNEFQTFKVYESEEQLPPNTVNLCNMGNIIDYSSDFTVDSGYVARVDSLVKLDTVIISVLPEVYSLASQSQHQLVDILGGNDQHTVIRQGDYNKDINGKISLCEPTDQGFLESTTKIIVVKENSLNLPLLDQSQDGSLNYEENVKMNLEHSISNYFSLNSLDPENQITTTGVEFSVKCLDSPISVRKTAKSISVAHDSEDESSPKLVEEDISNEDTLLYAFCKTTELAKIGCLSGDIVKMKSGQCQCTTFECNCESCPVQYRYIRIHAFTDPNTYEKGCIYLNPILSFNLNNPKIVKLCPISIPDKRFELQGFHFSKFIPLAKQVTIARVSSPVTLDRTLQTLFLTNLKTYFESGRKVLSKDQLIPIPVDTLLAKSIFSTYEKLGVDDSQFPTVIPEGKPDAIAWFKVTEVSGELADSASQQFIIDPLKTKMMQSGVVSCSPPKNSQHCNWANYLGCGQMFSFPNVSGVTTSTFEYAKTLRKLIKATIDPSRLVNLQTTVLLSSLSRAIGKSLLVHSLALECGVHLVEIDGYEVLNPSSESKTIGTIRGKLDRVVEGCTPLIVFIKHIEALTKKSEQQQKDSLAVKINELIDEYTAKPGVLFVASTNDSDNLSDELRAKFKFEIVLGVPSEQERTLIFKYLIDFDQKTTPKVTEGTRELSFAPRNDLSLSSLSLQSAGLTPRDLISIVENAKTLAVDRVESLAKHHNVSFENMVYSSGGYIKFTPEDVEKSINTARNKFSDSIGAPRIPNVKWEDVGGLDVVKDEILDTIDMPMKHPELFSNGIKKRSGILFYGPPGTGKTLLAKAIATNFALNFFSVKGPELLNMYIGESEANVRKVFQRARDAKPCVVFFDELDSVAPKRGNQGDSEGVMDRIVSQLLAELDGMSGGDGGDGVFVVGATNRPDLLDEALLRPGRFDKMLYLGVSDTHEKQSKIMEALSRKFHLHPSVDLDKVAESCPFTFTGADFYALCSDAMLNAMTRIANTVDEKIKRYNEELPEKSQVSTRWWFDNVATKEDIDVLVTLEDFDKSRKELVPSVSAEELDHYLRVRQNFEGGKEKKVVQENGQTEHFSNGSANNHITFGDEQVVEAIDENGNSIIA.

The protein belongs to the AAA ATPase family. In terms of assembly, interacts with PEX1; forming the PEX1-PEX6 AAA ATPase complex, which is composed of a heterohexamer formed by a trimer of PEX1-PEX6 dimers.

Its subcellular location is the membrane. It catalyses the reaction ATP + H2O = ADP + phosphate + H(+). Component of the PEX1-PEX6 AAA ATPase complex involved in peroxisome biosynthesis. The complex acts as a protein dislocase complex that mediates the ATP-dependent extraction of the PEX5 receptor from peroxisomal membranes, an essential step for PEX5 recycling. Specifically recognizes PEX5 monoubiquitinated at 'Cys-6', and pulls it out of the peroxisome lumen through the PEX2-PEX10-PEX12 retrotranslocation channel. Extraction by the PEX1-PEX6 AAA ATPase complex is accompanied by unfolding of the TPR repeats and release of bound cargo from PEX5. The sequence is that of Peroxisomal ATPase PEX6 from Komagataella pastoris (Yeast).